We begin with the raw amino-acid sequence, 1351 residues long: DNA-directed RNA polymerase subunit beta' (1351 aa).

Cysteine 70, cysteine 72, cysteine 85, and cysteine 88 together coordinate Zn(2+). Aspartate 460, aspartate 462, and aspartate 464 together coordinate Mg(2+). Zn(2+) contacts are provided by cysteine 801, cysteine 875, cysteine 882, and cysteine 885.

Belongs to the RNA polymerase beta' chain family. The RNAP catalytic core consists of 2 alpha, 1 beta, 1 beta' and 1 omega subunit. When a sigma factor is associated with the core the holoenzyme is formed, which can initiate transcription. It depends on Mg(2+) as a cofactor. Zn(2+) serves as cofactor.

The catalysed reaction is RNA(n) + a ribonucleoside 5'-triphosphate = RNA(n+1) + diphosphate. DNA-dependent RNA polymerase catalyzes the transcription of DNA into RNA using the four ribonucleoside triphosphates as substrates. The sequence is that of DNA-directed RNA polymerase subunit beta' from Syntrophobacter fumaroxidans (strain DSM 10017 / MPOB).